The primary structure comprises 364 residues: Acidic fibroblast growth factor intracellular-binding protein (364 aa).

Thr2 is modified (N-acetylthreonine).

In terms of assembly, binds to internalized FGF1; this interaction is increased in the presence of CSNKB, suggesting a possible cooperative interaction between CSNKB and FIBP in binding to FGF1. In terms of tissue distribution, highly expressed in heart, skeletal muscle and pancreas. Expressed at lower levels in brain. Also found in placenta, liver and kidney.

It localises to the nucleus. Its subcellular location is the endomembrane system. Functionally, may be involved in mitogenic function of FGF1. May mediate with IER2 FGF-signaling in the establishment of laterality in the embryo. This Homo sapiens (Human) protein is Acidic fibroblast growth factor intracellular-binding protein (FIBP).